Reading from the N-terminus, the 445-residue chain is Neuropeptide Y receptor type 5 (445 aa).

Over 1-42 the chain is Extracellular; that stretch reads MEFKLEEHFNKTFVTENNTAAARNAAFPAWEDYRGSVDDLQY. N10 and N17 each carry an N-linked (GlcNAc...) asparagine glycan. A helical transmembrane segment spans residues 43-63; it reads FLIGLYTFVSLLGFMGNLLIL. Residues 64-77 lie on the Cytoplasmic side of the membrane; the sequence is MAVMKKRNQKTTVN. Residues 78 to 98 form a helical membrane-spanning segment; the sequence is FLIGNLAFSDILVVLFCSPFT. The Extracellular segment spans residues 99 to 117; it reads LTSVLLDQWMFGKAMCHIM. A disulfide bond links C114 and C198. Residues 118–138 traverse the membrane as a helical segment; sequence PFLQCVSVLVSTLILISIAIV. Over 139 to 156 the chain is Cytoplasmic; the sequence is RYHMIKHPISNNLTANHG. The chain crosses the membrane as a helical span at residues 157–177; sequence YFLIATVWTLGFAICSPLPVF. Over 178 to 208 the chain is Extracellular; it reads HSLVELKETFGSALLSSKYLCVESWPSDSYR. A helical membrane pass occupies residues 209-229; the sequence is IAFTISLLLVQYILPLVCLTV. At 230 to 368 the chain is on the cytoplasmic side; sequence SHTSVCRSIS…KKRSRSVFYR (139 aa). Residues 369–389 traverse the membrane as a helical segment; the sequence is LTILILVFAVSWMPLHVFHVV. Topologically, residues 390–406 are extracellular; that stretch reads TDFNDNLISNRHFKLVY. A helical transmembrane segment spans residues 407 to 427; it reads CICHLLGMMSCCLNPILYGFL. The Cytoplasmic segment spans residues 428 to 445; sequence NNGIKADLRALIHCLHMS. Residue C441 is the site of S-palmitoyl cysteine attachment.

It belongs to the G-protein coupled receptor 1 family. Brain; hypothalamus.

It localises to the cell membrane. In terms of biological role, receptor for neuropeptide Y and peptide YY. The activity of this receptor is mediated by G proteins that inhibit adenylate cyclase activity. Seems to be associated with food intake. Could be involved in feeding disorders. This Rattus norvegicus (Rat) protein is Neuropeptide Y receptor type 5 (Npy5r).